The sequence spans 474 residues: Ribulose bisphosphate carboxylase large chain (474 aa).

Substrate-binding residues include asparagine 123 and threonine 173. The active-site Proton acceptor is lysine 175. Lysine 177 contacts substrate. Residues lysine 201, aspartate 203, and glutamate 204 each coordinate Mg(2+). An N6-carboxylysine modification is found at lysine 201. The Proton acceptor role is filled by histidine 293. Residues arginine 294, histidine 326, and serine 378 each contribute to the substrate site.

It belongs to the RuBisCO large chain family. Type I subfamily. As to quaternary structure, heterohexadecamer of 8 large chains and 8 small chains; disulfide-linked. The disulfide link is formed within the large subunit homodimers. Mg(2+) is required as a cofactor. In terms of processing, the disulfide bond which can form in the large chain dimeric partners within the hexadecamer appears to be associated with oxidative stress and protein turnover.

Its subcellular location is the carboxysome. It carries out the reaction 2 (2R)-3-phosphoglycerate + 2 H(+) = D-ribulose 1,5-bisphosphate + CO2 + H2O. The enzyme catalyses D-ribulose 1,5-bisphosphate + O2 = 2-phosphoglycolate + (2R)-3-phosphoglycerate + 2 H(+). Its function is as follows. RuBisCO catalyzes two reactions: the carboxylation of D-ribulose 1,5-bisphosphate, the primary event in carbon dioxide fixation, as well as the oxidative fragmentation of the pentose substrate in the photorespiration process. Both reactions occur simultaneously and in competition at the same active site. The sequence is that of Ribulose bisphosphate carboxylase large chain from Synechococcus sp.